A 91-amino-acid chain; its full sequence is Small ribosomal subunit protein uS15 (91 aa).

The protein belongs to the universal ribosomal protein uS15 family. Part of the 30S ribosomal subunit. Forms a bridge to the 50S subunit in the 70S ribosome, contacting the 23S rRNA.

One of the primary rRNA binding proteins, it binds directly to 16S rRNA where it helps nucleate assembly of the platform of the 30S subunit by binding and bridging several RNA helices of the 16S rRNA. Functionally, forms an intersubunit bridge (bridge B4) with the 23S rRNA of the 50S subunit in the ribosome. The protein is Small ribosomal subunit protein uS15 of Rickettsia akari (strain Hartford).